We begin with the raw amino-acid sequence, 256 residues long: Enolase-phosphatase E1 (256 aa).

Mg(2+)-binding residues include Asp14 and Glu16. Substrate is bound by residues 142-143 (SS) and Lys176. Position 201 (Asp201) interacts with Mg(2+).

This sequence belongs to the HAD-like hydrolase superfamily. MasA/MtnC family. As to quaternary structure, monomer. The cofactor is Mg(2+).

The protein resides in the cytoplasm. It is found in the nucleus. It catalyses the reaction 5-methylsulfanyl-2,3-dioxopentyl phosphate + H2O = 1,2-dihydroxy-5-(methylsulfanyl)pent-1-en-3-one + phosphate. Its pathway is amino-acid biosynthesis; L-methionine biosynthesis via salvage pathway; L-methionine from S-methyl-5-thio-alpha-D-ribose 1-phosphate: step 3/6. It participates in amino-acid biosynthesis; L-methionine biosynthesis via salvage pathway; L-methionine from S-methyl-5-thio-alpha-D-ribose 1-phosphate: step 4/6. Its function is as follows. Bifunctional enzyme that catalyzes the enolization of 2,3-diketo-5-methylthiopentyl-1-phosphate (DK-MTP-1-P) into the intermediate 2-hydroxy-3-keto-5-methylthiopentenyl-1-phosphate (HK-MTPenyl-1-P), which is then dephosphorylated to form the acireductone 1,2-dihydroxy-3-keto-5-methylthiopentene (DHK-MTPene). The sequence is that of Enolase-phosphatase E1 from Drosophila erecta (Fruit fly).